The primary structure comprises 492 residues: MTLWINGDWITGQGASRVKRNPVSGEVLWQGNDADAAQVEQACRAARAAFPRWARLSLAERQVVVERFAGLLESNKAELTAIIARETGKPRWEAATEVTAMINKIAISIKAYHVRTGEQRSEMPDGAASLRHRPHGVLAVFGPYNFPGHLPNGHIVPALLAGNTIIFKPSELTPWSGEAVMRLWQQAGLPPGVLNLVQGGRETGQALSALEDLDGLLFTGSANTGYQLHRQLSGQPEKILALEMGGNNPLIIDEVADIDAAVHLTIQSAFVTAGQRCTCARRLLLKSGAQGDAFLASLVAVSQRLTPGNWDDEPQPFIGGLISEQAAQQVVTAWQQLEAMGGRTLLAPRLLQAGTSLLTPGIIEMTGVGGVPDEEVFGPFLRVWRYDTFDEAIRMANNTRFGLFCGLVSPEREKFDQLLLEARAGIVNWNKPLTGAASTAPFGGIGASGNHRPSAWYAADYCAWPMASLESDSLTLPATLNPGLDFSDEVVR.

220-225 provides a ligand contact to NAD(+); it reads GSANTG. Catalysis depends on residues Glu243 and Cys277.

This sequence belongs to the aldehyde dehydrogenase family. AstD subfamily.

It carries out the reaction N-succinyl-L-glutamate 5-semialdehyde + NAD(+) + H2O = N-succinyl-L-glutamate + NADH + 2 H(+). Its pathway is amino-acid degradation; L-arginine degradation via AST pathway; L-glutamate and succinate from L-arginine: step 4/5. Its function is as follows. Catalyzes the NAD-dependent reduction of succinylglutamate semialdehyde into succinylglutamate. The polypeptide is N-succinylglutamate 5-semialdehyde dehydrogenase (Shigella flexneri).